A 695-amino-acid chain; its full sequence is Probable pre-mRNA-splicing factor ATP-dependent RNA helicase DEAH9 (695 aa).

The 166-residue stretch at 58–223 (LYLVENHATT…FNSSKKRHAP (166 aa)) folds into the Helicase ATP-binding domain. Residue 71–78 (GETGSGKT) coordinates ATP. A DEAH box motif is present at residues 170–173 (DEAH). A Helicase C-terminal domain is found at 261–438 (SVVSTILLIN…STVIQLKALG (178 aa)).

Belongs to the DEAD box helicase family. DEAH subfamily. DDX35 sub-subfamily.

It carries out the reaction ATP + H2O = ADP + phosphate + H(+). Its function is as follows. May be involved in pre-mRNA splicing. The polypeptide is Probable pre-mRNA-splicing factor ATP-dependent RNA helicase DEAH9 (Arabidopsis thaliana (Mouse-ear cress)).